The chain runs to 76 residues: DNA-directed RNA polymerase subunit epsilon (76 aa).

The protein belongs to the RNA polymerase subunit epsilon family. In terms of assembly, RNAP is composed of a core of 2 alpha, a beta and a beta' subunit. The core is associated with a delta subunit, and at least one of epsilon or omega. When a sigma factor is associated with the core the holoenzyme is formed, which can initiate transcription.

It catalyses the reaction RNA(n) + a ribonucleoside 5'-triphosphate = RNA(n+1) + diphosphate. Its function is as follows. A non-essential component of RNA polymerase (RNAP). The chain is DNA-directed RNA polymerase subunit epsilon from Streptococcus equi subsp. equi (strain 4047).